The sequence spans 96 residues: NADH-ubiquinone oxidoreductase chain 6 (96 aa).

The next 2 membrane-spanning stretches (helical) occupy residues 24-44 and 48-68; these read MSLL…LGSI and WFAY…FIYV.

Belongs to the complex I subunit 6 family.

Its subcellular location is the mitochondrion membrane. It catalyses the reaction a ubiquinone + NADH + 5 H(+)(in) = a ubiquinol + NAD(+) + 4 H(+)(out). Functionally, core subunit of the mitochondrial membrane respiratory chain NADH dehydrogenase (Complex I) that is believed to belong to the minimal assembly required for catalysis. Complex I functions in the transfer of electrons from NADH to the respiratory chain. The immediate electron acceptor for the enzyme is believed to be ubiquinone. The polypeptide is NADH-ubiquinone oxidoreductase chain 6 (ND6) (Albinaria turrita (Door snail)).